Reading from the N-terminus, the 105-residue chain is Small ribosomal subunit protein uS10 (105 aa).

The protein belongs to the universal ribosomal protein uS10 family. As to quaternary structure, part of the 30S ribosomal subunit.

Involved in the binding of tRNA to the ribosomes. The polypeptide is Small ribosomal subunit protein uS10 (Synechococcus elongatus (strain ATCC 33912 / PCC 7942 / FACHB-805) (Anacystis nidulans R2)).